Here is a 530-residue protein sequence, read N- to C-terminus: Pentatricopeptide repeat-containing protein At5g56310 (530 aa).

PPR repeat units lie at residues 77–114 (NTYL…CAKP), 115–149 (DTFT…GFDS), 150–180 (SVHV…MLVK), 181–211 (DVNV…MPCW), 214–248 (NEVS…NVEP), 249–283 (DEVT…GMNR), 284–314 (AVSL…VNER), 315–349 (NVVT…GVRP), 350–380 (NDVT…MRSK), and 386–420 (NIEH…ANAA). Positions 421–496 (IWGSLLAASN…MAGESSIEVE (76 aa)) are type E motif. A type E(+) motif region spans residues 497–527 (NRVYKFISGDLTHPQVERIHEILQEMDLQIQ).

Belongs to the PPR family. PCMP-E subfamily.

The protein is Pentatricopeptide repeat-containing protein At5g56310 (PCMP-E13) of Arabidopsis thaliana (Mouse-ear cress).